A 497-amino-acid polypeptide reads, in one-letter code: Vacuolar fusion protein CCZ1 homolog B (497 aa).

The interval 244–284 (GTSSWSYLRKGSGSPQISSRSTTVPPLGSGGTLPSGNGSST) is disordered.

It belongs to the CCZ1 family. In terms of assembly, interacts with MON1.

Its subcellular location is the endosome. It is found in the prevacuolar compartment. In terms of biological role, plays an important role in membrane trafficking through the secretory apparatus. In complex with MON1, acts as a guanine exchange factor (GEF) for RABG3F of the RAB7 protein family. Promotes the exchange of GDP to GTP, converting RABG3F from an inactive GDP-bound form into an active GTP-bound form. The RABG3F active form is involved in protein trafficking from prevacuolar compartments (PVCs) to vacuoles. May serve as a linker between Rab5 and Rab7 protein families in PVCs and mediate PVC maturation. The chain is Vacuolar fusion protein CCZ1 homolog B from Arabidopsis thaliana (Mouse-ear cress).